The chain runs to 338 residues: E3 ubiquitin-protein ligase SPL1 (338 aa).

The helical transmembrane segment at 1–21 (MIHLAGFTCCLGGVALYLLTR) threads the bilayer. Residues 22–223 (STGRDIKSIT…KLGDLSRRFK (202 aa)) are Chloroplast intermembrane-facing. A helical transmembrane segment spans residues 224–246 (YASMGLTVLGVILISKPVIEYIL). The Cytoplasmic segment spans residues 247-338 (KRIEDTLERR…IQQVLKIYRH (92 aa)). The segment at 291–326 (CVVCLDQKYNTAFVECGHMCCCTPCSLQLRTCPLCR) adopts an RING-type zinc-finger fold.

It localises to the plastid. The protein resides in the chloroplast outer membrane. It carries out the reaction S-ubiquitinyl-[E2 ubiquitin-conjugating enzyme]-L-cysteine + [acceptor protein]-L-lysine = [E2 ubiquitin-conjugating enzyme]-L-cysteine + N(6)-ubiquitinyl-[acceptor protein]-L-lysine.. It participates in protein modification; protein ubiquitination. Functionally, possesses E3 ubiquitin-protein ligase activity. The protein is E3 ubiquitin-protein ligase SPL1 of Arabidopsis thaliana (Mouse-ear cress).